The sequence spans 1312 residues: Probable histone-lysine N-methyltransferase lin-59 (1312 aa).

Composition is skewed to polar residues over residues 1–11 (MHGAGEQQQRY) and 25–36 (STSSHQYQQQGA). Disordered regions lie at residues 1–41 (MHGA…QMHQ), 54–81 (TTTSAAASTSSSGGSNSSGGSGGHRQQG), 154–223 (QPSG…KPVD), 312–435 (EESK…PPPV), and 524–556 (KDNIKKEVKEESTPPPTKLRGRLPSRRTREPSE). Residues 54 to 68 (TTTSAAASTSSSGGS) are compositionally biased toward low complexity. The segment covering 69–78 (NSSGGSGGHR) has biased composition (gly residues). The span at 160 to 176 (PMSSNAPATTSSATPDS) shows a compositional bias: low complexity. Residues 200–210 (DHDDEEDDDGP) are compositionally biased toward acidic residues. Residues 312 to 321 (EESKKKKDME) show a composition bias toward basic and acidic residues. Residues 344 to 367 (ATRSTNSPDVTTSNLPEEPSTSTM) are compositionally biased toward polar residues. Residues 371-382 (KENEDVEKVEGK) show a composition bias toward basic and acidic residues. Residues 383 to 394 (RRGRKPKKRRGF) show a composition bias toward basic residues. Composition is skewed to basic and acidic residues over residues 395–419 (HKESFEDLESDAKKSKAEQHEDHLP) and 524–535 (KDNIKKEVKEES). The 46-residue stretch at 590 to 635 (APSLTCGCTKGACTSDMDCLNRALRVQCSSDCSVPYCSNRRFWKED) folds into the AWS domain. The SET domain occupies 638–750 (NKLCVSNGPR…PNAEITVDKS (113 aa)). The disordered stretch occupies residues 913-934 (DNAPRARALSTSCPSPVPSKRG). Residues 967–1027 (AVRCICGALD…EYICDFCTNK (61 aa)) form a PHD-type zinc finger. Residues 1100-1223 (NKYRFPKAAT…KTQRVFEKVP (124 aa)) form the BAH domain. A disordered region spans residues 1248–1295 (RDFRPYDPSNPSPKPPKTSSIPSTSSIDPPQSSSDGLPEVDTKKLSKR). Low complexity predominate over residues 1264-1281 (KTSSIPSTSSIDPPQSSS).

It belongs to the class V-like SAM-binding methyltransferase superfamily. Histone-lysine methyltransferase family. SET2 subfamily. In terms of tissue distribution, widely expressed throughout embryonic development and into adulthood.

It localises to the nucleus. It catalyses the reaction L-lysyl-[histone] + S-adenosyl-L-methionine = N(6)-methyl-L-lysyl-[histone] + S-adenosyl-L-homocysteine + H(+). In terms of biological role, probable histone methyltransferase. Essential protein required to maintain expression of homeotic genes egl-5 and mab-5. May play an analogous role to the trithorax Group (trxG) proteins. TrxG proteins form multiprotein complexes that are required to maintain the transcriptionally active state of homeotic genes throughout development. May act via a modification of chromatin. The chain is Probable histone-lysine N-methyltransferase lin-59 (lin-59) from Caenorhabditis elegans.